A 125-amino-acid polypeptide reads, in one-letter code: Translation initiation factor 5A (125 aa).

K35 bears the Hypusine mark.

It belongs to the eIF-5A family.

The protein resides in the cytoplasm. Functionally, functions by promoting the formation of the first peptide bond. The polypeptide is Translation initiation factor 5A (eIF5A) (Methanoculleus marisnigri (strain ATCC 35101 / DSM 1498 / JR1)).